The sequence spans 345 residues: Opioid-binding protein/cell adhesion molecule (345 aa).

Residues 1–27 (MGVCGYLFLPWKCLVVVSLRLLFLVPT) form the signal peptide. 3 Ig-like C2-type domains span residues 39 to 126 (PKAM…PKTS), 136 to 219 (PQIM…VKIT), and 223 to 310 (PPYI…ASIT). Residues Asn44, Asn70, and Asn140 are each glycosylated (N-linked (GlcNAc...) asparagine). An intrachain disulfide couples Cys57 to Cys115. Cystine bridges form between Cys157/Cys202 and Cys244/Cys296. N-linked (GlcNAc...) asparagine glycosylation is found at Asn285, Asn293, and Asn306. The GPI-anchor amidated asparagine moiety is linked to residue Asn322. Positions 323–345 (SASRALACLWLSGTLLAHFFIKF) are cleaved as a propeptide — removed in mature form.

This sequence belongs to the immunoglobulin superfamily. IgLON family.

It is found in the cell membrane. Binds opioids in the presence of acidic lipids; probably involved in cell contact. This Homo sapiens (Human) protein is Opioid-binding protein/cell adhesion molecule (OPCML).